Here is a 774-residue protein sequence, read N- to C-terminus: 5-methyltetrahydropteroyltriglutamate--homocysteine methyltransferase (774 aa).

Residues 23–26 (RELK) and K123 each bind 5-methyltetrahydropteroyltri-L-glutamate. L-homocysteine-binding positions include 446 to 448 (IGS) and E499. Residues 446–448 (IGS) and E499 each bind L-methionine. 5-methyltetrahydropteroyltri-L-glutamate is bound by residues 530-531 (RC) and W576. Residue D614 coordinates L-homocysteine. D614 provides a ligand contact to L-methionine. E620 is a binding site for 5-methyltetrahydropteroyltri-L-glutamate. Zn(2+) contacts are provided by H656, C658, and E680. H709 functions as the Proton donor in the catalytic mechanism. Position 741 (C741) interacts with Zn(2+).

It belongs to the vitamin-B12 independent methionine synthase family. Zn(2+) serves as cofactor.

It carries out the reaction 5-methyltetrahydropteroyltri-L-glutamate + L-homocysteine = tetrahydropteroyltri-L-glutamate + L-methionine. It participates in amino-acid biosynthesis; L-methionine biosynthesis via de novo pathway; L-methionine from L-homocysteine (MetE route): step 1/1. In terms of biological role, catalyzes the transfer of a methyl group from 5-methyltetrahydrofolate to homocysteine resulting in methionine formation. This Aliivibrio fischeri (strain MJ11) (Vibrio fischeri) protein is 5-methyltetrahydropteroyltriglutamate--homocysteine methyltransferase.